The chain runs to 253 residues: Phosphate import ATP-binding protein PstB (253 aa).

Positions 5 to 248 (IETVNLNVYY…PEHELTEKYV (244 aa)) constitute an ABC transporter domain. Residue 37-44 (GPSGCGKS) coordinates ATP.

It belongs to the ABC transporter superfamily. Phosphate importer (TC 3.A.1.7) family. As to quaternary structure, the complex is composed of two ATP-binding proteins (PstB), two transmembrane proteins (PstC and PstA) and a solute-binding protein (PstS).

It localises to the cell membrane. The catalysed reaction is phosphate(out) + ATP + H2O = ADP + 2 phosphate(in) + H(+). In terms of biological role, part of the ABC transporter complex PstSACB involved in phosphate import. Responsible for energy coupling to the transport system. The polypeptide is Phosphate import ATP-binding protein PstB (Thermococcus kodakarensis (strain ATCC BAA-918 / JCM 12380 / KOD1) (Pyrococcus kodakaraensis (strain KOD1))).